Reading from the N-terminus, the 322-residue chain is MNLDYLDFEQPIAELEEKIQTLDNIKGKANIKDKADIINKIKALKSKSNALTKKIFSSLSDWQISQLARHPKRLYTLDYISDVFDEFTELHGDRTYGDDHAIIGGIATLDNQPVMFIGQQKGRTTQEKIKYNFGMPRPEGYRKALRLMKLAEKFSMPIVTFIDTPGAYPGIGAEERGQSEAIAKNLFEMSTLPTPIISIVIGEGGSGGALAIGVADIIMMFEYSIYSVISPEGCASILYKDVTKANLAAESLKLTSIHLKKERLIDVVINEPLGGIHRNPSQAKVLLKEVLTQQLNKIKQLPIEQLLQNRQKKLLGFGKFKD.

A CoA carboxyltransferase C-terminal domain is found at 43–297 (ALKSKSNALT…KEVLTQQLNK (255 aa)).

It belongs to the AccA family. In terms of assembly, acetyl-CoA carboxylase is a heterohexamer composed of biotin carboxyl carrier protein (AccB), biotin carboxylase (AccC) and two subunits each of ACCase subunit alpha (AccA) and ACCase subunit beta (AccD).

The protein localises to the cytoplasm. The catalysed reaction is N(6)-carboxybiotinyl-L-lysyl-[protein] + acetyl-CoA = N(6)-biotinyl-L-lysyl-[protein] + malonyl-CoA. The protein operates within lipid metabolism; malonyl-CoA biosynthesis; malonyl-CoA from acetyl-CoA: step 1/1. In terms of biological role, component of the acetyl coenzyme A carboxylase (ACC) complex. First, biotin carboxylase catalyzes the carboxylation of biotin on its carrier protein (BCCP) and then the CO(2) group is transferred by the carboxyltransferase to acetyl-CoA to form malonyl-CoA. This chain is Acetyl-coenzyme A carboxylase carboxyl transferase subunit alpha, found in Vesicomyosocius okutanii subsp. Calyptogena okutanii (strain HA).